We begin with the raw amino-acid sequence, 609 residues long: UvrABC system protein C (609 aa).

The 79-residue stretch at 16–94 (HLPGVYRHLD…IKSLRPRYNI (79 aa)) folds into the GIY-YIG domain. The 36-residue stretch at 203–238 (REVMDEIEARMLQASTELRFEEAAVLRDQMGSLSKV) folds into the UVR domain.

The protein belongs to the UvrC family. Interacts with UvrB in an incision complex.

Its subcellular location is the cytoplasm. In terms of biological role, the UvrABC repair system catalyzes the recognition and processing of DNA lesions. UvrC both incises the 5' and 3' sides of the lesion. The N-terminal half is responsible for the 3' incision and the C-terminal half is responsible for the 5' incision. The chain is UvrABC system protein C from Bordetella bronchiseptica (strain ATCC BAA-588 / NCTC 13252 / RB50) (Alcaligenes bronchisepticus).